The following is a 1198-amino-acid chain: Structural polyprotein (1198 aa).

The tract at residues 2–15 (TKKPGGPGKNRAIN) is interaction with host EXOC1. Topologically, residues 2 to 109 (TKKPGGPGKN…RKQNKRGGNE (108 aa)) are cytoplasmic. Positions 37–72 (LLDGRGPVRFVLALITFFKFTALAPTKALLGRWKAV) are hydrophobic; homodimerization of capsid protein C. The propeptide at 106–127 (GGNEGSIMWLASLAVVIAYAGA) is ER anchor for the capsid protein C, removed in mature form by serine protease NS3. Residues 110-130 (GSIMWLASLAVVIAYAGAMKL) form a helical membrane-spanning segment. Residues 131–253 (SNFQGKLLMT…ATRYLMKTEN (123 aa)) are Extracellular-facing. Asn142 carries N-linked (GlcNAc...) asparagine; by host glycosylation. Residues 254 to 274 (WIIRNPGYAFLAATLGWMLGS) traverse the membrane as a helical segment. Residues 275-279 (NNGQR) lie on the Cytoplasmic side of the membrane. Residues 280–294 (VVFTILLLLVAPAYS) form a helical membrane-spanning segment. Residues 295 to 746 (FNCLGMGNRD…QVFGGAFRTL (452 aa)) lie on the Extracellular side of the membrane. 6 disulfide bridges follow: Cys297/Cys324, Cys354/Cys410, Cys354/Cys415, Cys368/Cys399, Cys386/Cys410, and Cys386/Cys415. Residues 392–405 (DRGWGNGCGLFGKG) form a fusion peptide region. A glycan (N-linked (GlcNAc...) asparagine; by host) is linked at Asn448. 2 cysteine pairs are disulfide-bonded: Cys484–Cys581 and Cys598–Cys629. A helical transmembrane segment spans residues 747 to 767 (FGGMSWITQGLMGALLLWMGV). The Cytoplasmic portion of the chain corresponds to 768-773 (NARDRS). The chain crosses the membrane as a helical span at residues 774-794 (IALAFLATGGVLVFLATNVHA). Over 795 to 1198 (DTGCAIDITR…CADAWGHHLH (404 aa)) the chain is Extracellular. Disulfide bonds link Cys798–Cys809, Cys849–Cys937, Cys973–Cys1017, Cys1074–Cys1123, Cys1085–Cys1106, and Cys1107–Cys1110. Residues Asn924 and Asn1001 are each glycosylated (N-linked (GlcNAc...) asparagine; by host). The disordered stretch occupies residues 1152-1177 (VDPFSAGPSGDVSGHPGGPSQEVDGQ).

In terms of assembly, homodimer. Interacts (via N-terminus) with host EXOC1 (via C-terminus); this interaction results in EXOC1 degradation through the proteasome degradation pathway. Interacts with host CAPRIN1; this interaction is involved in the suppression of the integrated stress response. Forms heterodimers with envelope protein E in the endoplasmic reticulum and Golgi. As to quaternary structure, homodimer; in the endoplasmic reticulum and Golgi. Interacts with protein prM. Interacts with non-structural protein 1. In terms of processing, genome polyprotein: Specific enzymatic cleavages in vivo yield mature proteins. Cleavages in the lumen of endoplasmic reticulum are performed by host signal peptidase, whereas cleavages in the cytoplasmic side are performed by serine protease NS3. Signal cleavage at the 2K-4B site requires a prior NS3 protease-mediated cleavage at the 4A-2K site. Cleaved in post-Golgi vesicles by a host furin, releasing the mature small envelope protein M, and peptide pr. This cleavage is incomplete as up to 30% of viral particles still carry uncleaved prM. Post-translationally, N-glycosylated.

The protein localises to the secreted. It is found in the virion membrane. The protein resides in the host endoplasmic reticulum membrane. Its function is as follows. Plays a role in virus budding by binding to the cell membrane and gathering the viral RNA into a nucleocapsid that forms the core of a mature virus particle. During virus entry, may induce genome penetration into the host cytoplasm after hemifusion induced by the surface proteins. Can migrate to the cell nucleus where it modulates host functions. Overcomes the anti-viral effects of host EXOC1 by sequestering and degrading the latter through the proteasome degradation pathway. Inhibits the integrated stress response (ISR) in the infected cell by binding to host CAPRIN1. Functionally, inhibits RNA silencing by interfering with host Dicer. In terms of biological role, prevents premature fusion activity of envelope proteins in trans-Golgi by binding to envelope protein E at pH6.0. After virion release in extracellular space, gets dissociated from E dimers. Acts as a chaperone for envelope protein E during intracellular virion assembly by masking and inactivating envelope protein E fusion peptide. prM is the only viral peptide matured by host furin in the trans-Golgi network probably to avoid catastrophic activation of the viral fusion activity in acidic Golgi compartment prior to virion release. prM-E cleavage is inefficient, and many virions are only partially matured. These uncleaved prM would play a role in immune evasion. Its function is as follows. May play a role in virus budding. Exerts cytotoxic effects by activating a mitochondrial apoptotic pathway through M ectodomain. May display a viroporin activity. Functionally, binds to host cell surface receptor and mediates fusion between viral and cellular membranes. Envelope protein is synthesized in the endoplasmic reticulum in the form of heterodimer with protein prM. They play a role in virion budding in the ER, and the newly formed immature particle is covered with 60 spikes composed of heterodimer between precursor prM and envelope protein E. The virion is transported to the Golgi apparatus where the low pH causes dissociation of PrM-E heterodimers and formation of E homodimers. prM-E cleavage is inefficient, and many virions are only partially matured. These uncleaved prM would play a role in immune evasion. In terms of biological role, may play a role in neuroinvasiveness. The chain is Structural polyprotein from Japanese encephalitis virus (strain Jaoars982) (JEV).